Here is a 570-residue protein sequence, read N- to C-terminus: Sulfite reductase [NADPH] hemoprotein beta-component (570 aa).

The [4Fe-4S] cluster site is built by Cys434, Cys440, Cys479, and Cys483. Cys483 serves as a coordination point for siroheme.

It belongs to the nitrite and sulfite reductase 4Fe-4S domain family. As to quaternary structure, alpha(8)-beta(8). The alpha component is a flavoprotein, the beta component is a hemoprotein. The cofactor is siroheme. [4Fe-4S] cluster is required as a cofactor.

It carries out the reaction hydrogen sulfide + 3 NADP(+) + 3 H2O = sulfite + 3 NADPH + 4 H(+). It participates in sulfur metabolism; hydrogen sulfide biosynthesis; hydrogen sulfide from sulfite (NADPH route): step 1/1. Functionally, component of the sulfite reductase complex that catalyzes the 6-electron reduction of sulfite to sulfide. This is one of several activities required for the biosynthesis of L-cysteine from sulfate. This is Sulfite reductase [NADPH] hemoprotein beta-component from Escherichia coli (strain ATCC 8739 / DSM 1576 / NBRC 3972 / NCIMB 8545 / WDCM 00012 / Crooks).